Reading from the N-terminus, the 58-residue chain is ComX pheromone (58 aa).

Positions 1–52 (MKQDMIDYLMKNPQVLTKLENGEASLIGIPDKLIPSIVDIFNKKMTLSKKCK) are excised as a propeptide. Tryptophan 56 carries the 3'-geranyl-2',N2-cyclotryptophan; in strain RO-E-2 /NRRL B-23055 lipid modification.

Interacts directly with the sensor histidine kinase ComP and stimulates its activity. Trp-56 is modified by geranylation, which is essential for activity. Modified by the tryptophan prenyltransferase ComQ before export to the extracellular environment. The type of isoprenyl derivative differs among the different pherotypes and depends on ComX primary sequence.

It is found in the secreted. Its function is as follows. Part of a major quorum-sensing system that regulates the development of genetic competence. Acts through the activation of the two-component regulatory system ComP/ComA composed of a sensor histidine kinase, ComP, and a response regulator, ComA. The sequence is that of ComX pheromone from Bacillus spizizenii (Bacillus subtilis subsp. spizizenii).